A 209-amino-acid polypeptide reads, in one-letter code: Cytidylyl-2-hydroxypropylphosphonate hydrolase (209 aa).

Residues asparagine 111, aspartate 127, glutamate 129, and aspartate 131 each contribute to the a divalent metal cation site. The active-site Proton donor is the lysine 144. Aspartate 145 is an a divalent metal cation binding site.

Belongs to the FomD family. As to quaternary structure, monomer in solution. It depends on Mn(2+) as a cofactor. Requires Co(2+) as cofactor.

The enzyme catalyses cytidine 5'-({hydroxy[(S)-2-hydroxypropyl]phosphonoyl}phosphate) + H2O = (S)-2-hydroxypropylphosphonate + CMP + H(+). The protein operates within antibiotic biosynthesis; fosfomycin biosynthesis. Hydrolysis of (S)-HPP-CMP is inhibited by CDP. Functionally, involved in fosfomycin biosynthesis. Catalyzes the hydrolysis of cytidylyl (S)-2-hydroxypropylphosphonate ((S)-HPP-CMP) to give (S)-2-hydroxypropylphosphonate ((S)-HPP) and CMP. Can also hydrolyze (R)-HPP-CMP and cytidylyl 2-hydroxyethylphosphonate (HEP-CMP), which is a biosynthetic intermediate before C-methylation, but the catalytic efficiency is much higher with (S)-HPP-CMP. The polypeptide is Cytidylyl-2-hydroxypropylphosphonate hydrolase (Streptomyces wedmorensis).